A 573-amino-acid chain; its full sequence is Acyl-coenzyme A synthetase ACSM1, mitochondrial (573 aa).

A mitochondrion-targeting transit peptide spans 1–35 (MQWLKSFQICKVLQGFSLSPTQLHRRLFSRVGAPR). The residue at position 81 (Lys81) is an N6-succinyllysine. An N6-acetyllysine; alternate modification is found at Lys142. At Lys142 the chain carries N6-succinyllysine; alternate. Lys179 carries the N6-succinyllysine modification. N6-acetyllysine; alternate is present on Lys200. An N6-succinyllysine; alternate modification is found at Lys200. Position 210 is an N6-acetyllysine (Lys210). Position 222 to 230 (222 to 230 (TSGTTGYPK)) interacts with ATP. An N6-succinyllysine mark is found at Lys233 and Lys324. N6-acetyllysine; alternate occurs at positions 352 and 387. Residues Lys352 and Lys387 each carry the N6-succinyllysine; alternate modification. ATP contacts are provided by Asp448 and Arg463. Lys501 is subject to N6-succinyllysine. Lys527 carries the N6-acetyllysine modification. Position 534 is an N6-acetyllysine; alternate (Lys534). N6-succinyllysine; alternate is present on Lys534. Lys545 is modified (N6-acetyllysine). Lys559 is an ATP binding site.

Belongs to the ATP-dependent AMP-binding enzyme family. Monomer. The cofactor is Mg(2+). It depends on Mn(2+) as a cofactor. As to expression, highly expressed in liver and kidney.

It localises to the mitochondrion matrix. Its subcellular location is the mitochondrion. The enzyme catalyses a medium-chain fatty acid + ATP + CoA = a medium-chain fatty acyl-CoA + AMP + diphosphate. It catalyses the reaction benzoate + ATP + CoA = benzoyl-CoA + AMP + diphosphate. The catalysed reaction is (R)-lipoate + GTP + H(+) = (R)-lipoyl-GMP + diphosphate. It carries out the reaction octanoate + ATP + CoA = octanoyl-CoA + AMP + diphosphate. The enzyme catalyses decanoate + ATP + CoA = decanoyl-CoA + AMP + diphosphate. It catalyses the reaction dodecanoate + ATP + CoA = dodecanoyl-CoA + AMP + diphosphate. The catalysed reaction is tetradecanoate + ATP + CoA = tetradecanoyl-CoA + AMP + diphosphate. It carries out the reaction hexanoate + ATP + CoA = hexanoyl-CoA + AMP + diphosphate. The enzyme catalyses butanoate + ATP + CoA = butanoyl-CoA + AMP + diphosphate. It catalyses the reaction hexadecanoate + ATP + CoA = hexadecanoyl-CoA + AMP + diphosphate. In terms of biological role, catalyzes the activation of fatty acids by CoA to produce an acyl-CoA, the first step in fatty acid metabolism. Capable of activating medium-chain fatty acids (e.g. butyric (C4) to decanoic (C10) acids), and certain carboxylate-containing xenobiotics, e.g. benzoate. Also catalyzes the activation of lipoate to lipoyl-nucleoside monophosphate. Activates lipoate with GTP at a 1000-fold higher rate than with ATP and activates both (R)- and (S)-lipoate to the respective lipoyl-GMP, with a preference for (R)-lipoate. In Mus musculus (Mouse), this protein is Acyl-coenzyme A synthetase ACSM1, mitochondrial (Acsm1).